Consider the following 326-residue polypeptide: Beta-ketoacyl-[acyl-carrier-protein] synthase III (326 aa).

Residues cysteine 112 and histidine 251 contribute to the active site. The ACP-binding stretch occupies residues 252–256 (QANSR). Asparagine 281 is an active-site residue.

This sequence belongs to the thiolase-like superfamily. FabH family. As to quaternary structure, homodimer.

It localises to the cytoplasm. The enzyme catalyses malonyl-[ACP] + acetyl-CoA + H(+) = 3-oxobutanoyl-[ACP] + CO2 + CoA. It participates in lipid metabolism; fatty acid biosynthesis. Catalyzes the condensation reaction of fatty acid synthesis by the addition to an acyl acceptor of two carbons from malonyl-ACP. Catalyzes the first condensation reaction which initiates fatty acid synthesis and may therefore play a role in governing the total rate of fatty acid production. Possesses both acetoacetyl-ACP synthase and acetyl transacylase activities. Its substrate specificity determines the biosynthesis of branched-chain and/or straight-chain of fatty acids. In Clostridium botulinum (strain Okra / Type B1), this protein is Beta-ketoacyl-[acyl-carrier-protein] synthase III.